The chain runs to 1222 residues: Serine/threonine-protein kinase WNK4 (1222 aa).

Residues 1–17 (MLAPRNTETGVPMSQTE) are compositionally biased toward polar residues. The disordered stretch occupies residues 1-165 (MLAPRNTETG…DTETQAVATS (165 aa)). Over residues 90–101 (AGPTRSPPSSSK) the composition is skewed to low complexity. Ser-95 bears the Phosphoserine mark. The span at 135–152 (EPPRVPDAAARERRREQE) shows a compositional bias: basic and acidic residues. Glycyl lysine isopeptide (Lys-Gly) (interchain with G-Cter in ubiquitin) cross-links involve residues Lys-154 and Lys-172. One can recognise a Protein kinase domain in the interval 171 to 429 (LKFDIEIGRG…IQDLLAHAFF (259 aa)). Ser-181 provides a ligand contact to ATP. Glycyl lysine isopeptide (Lys-Gly) (interchain with G-Cter in ubiquitin) cross-links involve residues Lys-183, Lys-223, and Lys-238. ATP is bound by residues 251–254 (TELM) and Lys-301. Asp-318 functions as the Proton acceptor in the catalytic mechanism. A Glycyl lysine isopeptide (Lys-Gly) (interchain with G-Cter in ubiquitin) cross-link involves residue Lys-325. Ser-328 and Ser-332 each carry phosphoserine; by autocatalysis. Glycyl lysine isopeptide (Lys-Gly) (interchain with G-Cter in ubiquitin) cross-links involve residues Lys-384, Lys-390, Lys-447, and Lys-451. A disordered region spans residues 525-562 (RELEVLPPDSGPPPATVSLAPGPPSAFPPEPEEPEADQ). Over residues 533-553 (DSGPPPATVSLAPGPPSAFPP) the composition is skewed to pro residues. The tract at residues 554-564 (EPEEPEADQHQ) is interaction with KLHL3. Ser-572 carries the post-translational modification Phosphoserine. 4 disordered regions span residues 626–659 (RSGP…MRKN), 747–809 (DAGP…GAPF), 877–896 (SYPQ…SPPS), and 927–976 (SPGL…AQPL). 4 stretches are compositionally biased toward low complexity: residues 627–638 (SGPGSDFSPGDS), 757–769 (ALSP…ALPA), 793–807 (STSP…SPGA), and 877–890 (SYPQ…SLPV). The segment covering 935–944 (PPAPPGPLPS) has biased composition (pro residues). Over residues 953–963 (DQESLSAQTAE) the composition is skewed to polar residues. Lys-990 participates in a covalent cross-link: Glycyl lysine isopeptide (Lys-Gly) (interchain with G-Cter in ubiquitin). The RFXV motif motif lies at 996–999 (RFQV). A disordered region spans residues 1000-1087 (TSSKEPAEPP…SSPILSHPSP (88 aa)). Phosphoserine is present on Ser-1014. A compositionally biased stretch (low complexity) spans 1014-1032 (SPTLSRSLKLPSPPLTSES). Over residues 1044-1056 (ETREALAESDRAA) the composition is skewed to basic and acidic residues. Glycyl lysine isopeptide (Lys-Gly) (interchain with G-Cter in ubiquitin) cross-links involve residues Lys-1123, Lys-1136, and Lys-1137. Positions 1166–1222 (RRLSKGSFPTSRRNSLQRSDLPGPGIMRRNSLSGSSTGSQEQRASKGVTFAGDIGRM) are disordered. Composition is skewed to polar residues over residues 1172–1183 (SFPTSRRNSLQR) and 1195–1207 (NSLS…SQEQ). Ser-1196 bears the Phosphoserine mark.

The protein belongs to the protein kinase superfamily. Ser/Thr protein kinase family. WNK subfamily. Interacts with the C-terminal region of KCNJ1. Interacts with WNK1 and WNK3. Interacts with KLHL3. It depends on Mg(2+) as a cofactor. Autophosphorylated at Ser-328 and Ser-332, promoting its activation. Phosphorylated by WNK1 and WNK3. Phosphorylated at Ser-572 in a MAP3K15/ASK3-dependent process in response to osmotic stress or hypotonic low-chloride stimulation. Post-translationally, ubiquitinated by the BCR(KLHL3) complex, leading to its degradation. Also ubiquitinated by the BCR(KLHL2) complex. Locates to the distal convoluted tubule, the medullary collecting duct and the cortical collecting duct of the kidney. Expressed in pancreatic duct.

Its subcellular location is the cell junction. It is found in the tight junction. The enzyme catalyses L-seryl-[protein] + ATP = O-phospho-L-seryl-[protein] + ADP + H(+). The catalysed reaction is L-threonyl-[protein] + ATP = O-phospho-L-threonyl-[protein] + ADP + H(+). Its activity is regulated as follows. Activation requires autophosphorylation of Ser-328 and Ser-332. Autophosphorylation and subsequent activation is inhibited by increases in intracellular ionic strength: Cl(-) potently inhibits WNK4 kinase activity via direct binding. Also inhibited by K(+) ions. Serine/threonine-protein kinase component of the WNK4-SPAK/OSR1 kinase cascade, which acts as a key regulator of ion transport in the distal nephron and blood pressure. The WNK4-SPAK/OSR1 kinase cascade is composed of WNK4, which mediates phosphorylation and activation of downstream kinases OXSR1/OSR1 and STK39/SPAK. Following activation, OXSR1/OSR1 and STK39/SPAK catalyze phosphorylation of ion cotransporters, such as SLC12A1/NKCC2, SLC12A2/NKCC1, SLC12A3/NCC, SLC12A5/KCC2 or SLC12A6/KCC3, regulating their activity. Acts as a molecular switch that regulates the balance between renal salt reabsorption and K(+) secretion by modulating the activities of renal transporters and channels, including the Na-Cl cotransporter SLC12A3/NCC and the K(+) channel, KCNJ1/ROMK. Regulates NaCl reabsorption in the distal nephron by activating the thiazide-sensitive Na-Cl cotransporter SLC12A3/NCC in distal convoluted tubule cells of kidney: activates SLC12A3/NCC in a OXSR1/OSR1- and STK39/SPAK-dependent process. Also acts as a scaffold protein independently of its protein kinase activity: negatively regulates cell membrane localization of various transporters and channels (CFTR, KCNJ1/ROMK, SLC4A4, SLC26A9 and TRPV4) by clathrin-dependent endocytosis. Also inhibits the activity of the epithelial Na(+) channel (ENaC) SCNN1A, SCNN1B, SCNN1D in a inase-independent mechanism. May also phosphorylate NEDD4L. In Mus musculus (Mouse), this protein is Serine/threonine-protein kinase WNK4.